The following is a 386-amino-acid chain: S-adenosylmethionine synthase (386 aa).

His-16 provides a ligand contact to ATP. Asp-18 is a binding site for Mg(2+). Glu-44 lines the K(+) pocket. Positions 57 and 100 each coordinate L-methionine. The segment at Gln-100 to Arg-110 is flexible loop. Residues Asp-165–Lys-167, Asp-240, Arg-246–Lys-247, Ala-263, and Lys-267 contribute to the ATP site. Asp-240 is a binding site for L-methionine. Lys-271 contacts L-methionine.

This sequence belongs to the AdoMet synthase family. Homotetramer; dimer of dimers. Mg(2+) serves as cofactor. K(+) is required as a cofactor.

It is found in the cytoplasm. The catalysed reaction is L-methionine + ATP + H2O = S-adenosyl-L-methionine + phosphate + diphosphate. Its pathway is amino-acid biosynthesis; S-adenosyl-L-methionine biosynthesis; S-adenosyl-L-methionine from L-methionine: step 1/1. In terms of biological role, catalyzes the formation of S-adenosylmethionine (AdoMet) from methionine and ATP. The overall synthetic reaction is composed of two sequential steps, AdoMet formation and the subsequent tripolyphosphate hydrolysis which occurs prior to release of AdoMet from the enzyme. The sequence is that of S-adenosylmethionine synthase from Francisella tularensis subsp. tularensis (strain FSC 198).